The chain runs to 2034 residues: MTVKEKLLKVKQKFKRGDSSSDVDSGPERDRDEDDSDNESRNTSKTSKSSKKSKSGKSTGTSEMTELSDDGGSDIELLPDDGKSFGKRKLQDTDKPCTWNVLVRIIEAKDVSTGSARVRTIFDGNSKMTRTVTHAIPKWRQNILYTIKNQPLEKLAAKVLTLRLVRPTALGESSVGEFSCYLSEVIHSPDRSVIAKWVALGFPGMDDEEPDDIAYENCGFLKVTLSVYRIDESPPTLIDDDGKEQIWSGAHLIDYTLKIRVFSVEQLIRQMINERKIKKKQRFYVMVQCGAHKTETTMESAFLDEDANIASVKFEQEIYLPIQWPTVISEIIFSLFDKKGRGKTCIGKATLPMKMIYEPGETGYLPTFGPAFLNVFDCERVTRFSIFSRKMRGSQQDGSRFVGRLFIAIDCVEYMEKANAQIMHLDHSPIMEAESICKNLEWYNCFCSMSGLNMINPQFASDPVCIMMSIGSFGSTSNEFRSCNSSTLPAEPNWDGCKYFTMPWGNLRPVAEVNAPWEVIEHRIEMSNVLMKMTNMLDTMIWEVRRIGNKAIDHVSSVGMEALECLEQQIDSASKYLGRINPVSSNALDRHILDYRKEKILKLREHFEKEAFSIDYSDGEVDAKLLRMLLKIRSMTLELAEDVQMTIPPVLIKMMSHGKLIGFAKIPISEIFQSDDEAQSGEWCGRTRAINIQWPTLVDQRNRKREHVAVLHAKMWFGRTDQLTKWKEHVQPADIRRFMEMYEVQTKGLALKWKDEADIYDGKWEKTNEVPLENGWNAVGHWIVMNTRHMFVPKLGQHTVHDKAFEIQKRTEDGTWKHFKYTDCYADELKPKDLDKHAKGWEVGSWAQDKFRNNGDEKGWVYSTNGVFFGSGVLTDREEKVHHNFRKRCIKRPRKHEGYNKELEDFEHFRTTMGNENWEYSPSKKEGPYHDLEDRTDRIRRRRYVREVENKDPDSEDPRFRVYEYQMQTGKWQLRCYIMWGNDLLPVVKNSSRAFVRISFAQYSKQTLLVDNSQNPIWNETVMFKSVLIAGGTRDIMKYPPVVSVEVVGECSNNEEANLGHFETKPNVICGNTDVRGTPQWFPLKFSNGRTRGAVLACFELYSEEDKDLIPLEPKCKHNYKERSEIPTEFRPQFDKFHVQFLCWGVRNLKKHKLLAVRRPFVGLTIGDQEFTLQPLKDVRRDPNFPEPMIVFGEVILPSALELSPPLIINLFDARAFNRQPLVGSCLVSDLHKYVSHIVPKVKSDHAERWEQLDLVITEEFDQIIRMVRVPTLTTDPMVPLDWWSRYYASMSQFHRSPGYPESGMEYVRIFRRPLEQMNGYNNFSDFLDTFPFVKSMKGDFDDPEEKEKAGELKCRLLISKLKKGKPPAAINTVVDFVGPTRCLVRVYIIEANGLISNARKGRVDSYVKLHCGKQNVNLKKNYRSECCDPIFGERVDMTVTIPLEKDLKITVMGKRRILSDQEIGSTTIDLENRLLTKWRATGGLSGQFTVQGELQWRDQMTPMEILKSYCYKMMLSVPKIESRQTERGEEKGITIEKITFWFSEVLHVFENEEIAMLNSQRQKAGKENFSDGSDQQNEDVSDGSWDEEDLEREKEKLKWEKHRSKGKPLKKVTTEKAETADGELRKKAKMRIMGSQLQTIALFILRQMNLVPEHVESRPLFSDKGGRTQKGELRMFVDIFPMEYGAIPAPFNIAPRKPINYQLRIAVMDVRGAIPVKRSFAEPVSDLYVKAFINGMTKGHKTDTHFRVLDGTGEFNWRFLLNFDYNPWEKKVVAYTKNRFFCKPVEELVDPILVIELWDKNKFRKDRLLGDIELDLLDFIEGIGSPSDVGVYSTKKRQRGVKCPKCCTRRGCLCKCCIFCFETKCLCGKRKVKKKPFPKPVLFVEPEGYDDTVNIFESRNLYGWWPMLTEEYPHEEPQNAKKKNDDVGKDPKWIMGLVEMDMLLLTKQEADQEPAGKKRSEPNHSPFLEKPDRKSWANSWLVSRIKPCIKYFWHYYGLQILLWLIIIVILILTIFVLLHTWPTILAEIIKAIF.

The interval 1 to 80 is disordered; that stretch reads MTVKEKLLKV…GGSDIELLPD (80 aa). Over 1–1998 the chain is Cytoplasmic; it reads MTVKEKLLKV…CIKYFWHYYG (1998 aa). Over residues 66–79 the composition is skewed to acidic residues; the sequence is ELSDDGGSDIELLP. C2 domains are found at residues 229 to 367, 954 to 1082, 1120 to 1246, and 1363 to 1484; these read RIDE…YLPT, DSED…PQWF, YKER…KSDH, and KKGK…ATGG. Residues 1563–1619 are disordered; that stretch reads QKAGKENFSDGSDQQNEDVSDGSWDEEDLEREKEKLKWEKHRSKGKPLKKVTTEKAE. Acidic residues predominate over residues 1577 to 1591; the sequence is QNEDVSDGSWDEEDL. A compositionally biased stretch (basic residues) spans 1600 to 1611; that stretch reads WEKHRSKGKPLK. The 148-residue stretch at 1684–1831 folds into the C2 5 domain; that stretch reads EYGAIPAPFN…EGIGSPSDVG (148 aa). Residues 1953 to 1972 form a disordered region; sequence QEPAGKKRSEPNHSPFLEKP. The helical transmembrane segment at 1999 to 2019 threads the bilayer; the sequence is LQILLWLIIIVILILTIFVLL. Residues 2020 to 2034 lie on the Extracellular side of the membrane; sequence HTWPTILAEIIKAIF.

This sequence belongs to the ferlin family. As to expression, exclusively expressed in the testis.

It localises to the membrane. In terms of biological role, required for the fusion of the membranous organelles (MOs) with the plasma membrane, a process essential in spermiogenesis. In Caenorhabditis elegans, this protein is Sperm vesicle fusion protein fer-1 (fer-1).